Consider the following 312-residue polypeptide: Carbamate kinase 2 (312 aa).

Belongs to the carbamate kinase family.

Its subcellular location is the cytoplasm. The enzyme catalyses hydrogencarbonate + NH4(+) + ATP = carbamoyl phosphate + ADP + H2O + H(+). Its pathway is metabolic intermediate metabolism; carbamoyl phosphate degradation; CO(2) and NH(3) from carbamoyl phosphate: step 1/1. The sequence is that of Carbamate kinase 2 (arcC2) from Enterococcus faecalis (strain ATCC 700802 / V583).